Here is a 197-residue protein sequence, read N- to C-terminus: Probable GTP-binding protein EngB (197 aa).

An EngB-type G domain is found at 22–195 (ELPEVALAGR…WKAIYALITE (174 aa)). GTP is bound by residues 30–37 (GRSNVGKS), 57–61 (GKTQT), 75–78 (DVPG), 142–145 (TKLD), and 174–176 (FSA). S37 and T59 together coordinate Mg(2+).

Belongs to the TRAFAC class TrmE-Era-EngA-EngB-Septin-like GTPase superfamily. EngB GTPase family. Requires Mg(2+) as cofactor.

Its function is as follows. Necessary for normal cell division and for the maintenance of normal septation. This is Probable GTP-binding protein EngB from Exiguobacterium sp. (strain ATCC BAA-1283 / AT1b).